The sequence spans 190 residues: GTP cyclohydrolase 1 (190 aa).

Zn(2+)-binding residues include Cys75, His78, and Cys146.

Belongs to the GTP cyclohydrolase I family. In terms of assembly, toroid-shaped homodecamer, composed of two pentamers of five dimers.

The enzyme catalyses GTP + H2O = 7,8-dihydroneopterin 3'-triphosphate + formate + H(+). It participates in cofactor biosynthesis; 7,8-dihydroneopterin triphosphate biosynthesis; 7,8-dihydroneopterin triphosphate from GTP: step 1/1. In Campylobacter jejuni subsp. jejuni serotype O:23/36 (strain 81-176), this protein is GTP cyclohydrolase 1.